Reading from the N-terminus, the 245-residue chain is Aliphatic sulfonates import ATP-binding protein SsuB (245 aa).

The region spanning 6–225 is the ABC transporter domain; the sequence is VTVRGLRRAF…SRGDEGFDDL (220 aa). 38 to 45 provides a ligand contact to ATP; sequence GLSGSGKS.

The protein belongs to the ABC transporter superfamily. Aliphatic sulfonates importer (TC 3.A.1.17.2) family. As to quaternary structure, the complex is composed of two ATP-binding proteins (SsuB), two transmembrane proteins (SsuC) and a solute-binding protein (SsuA).

Its subcellular location is the cell membrane. The enzyme catalyses ATP + H2O + aliphatic sulfonate-[sulfonate-binding protein]Side 1 = ADP + phosphate + aliphatic sulfonateSide 2 + [sulfonate-binding protein]Side 1.. Functionally, part of the ABC transporter complex SsuABC involved in aliphatic sulfonates import. Responsible for energy coupling to the transport system. The polypeptide is Aliphatic sulfonates import ATP-binding protein SsuB (Mycobacterium sp. (strain MCS)).